The primary structure comprises 1358 residues: DNA-directed RNA polymerase subunit beta (1358 aa).

This sequence belongs to the RNA polymerase beta chain family. The RNAP catalytic core consists of 2 alpha, 1 beta, 1 beta' and 1 omega subunit. When a sigma factor is associated with the core the holoenzyme is formed, which can initiate transcription.

The enzyme catalyses RNA(n) + a ribonucleoside 5'-triphosphate = RNA(n+1) + diphosphate. Its function is as follows. DNA-dependent RNA polymerase catalyzes the transcription of DNA into RNA using the four ribonucleoside triphosphates as substrates. The polypeptide is DNA-directed RNA polymerase subunit beta (Francisella tularensis subsp. holarctica (strain LVS)).